The following is a 191-amino-acid chain: uncharacterized protein (191 aa).

This is an uncharacterized protein from Bacillus subtilis (strain 168).